The following is a 164-amino-acid chain: Phosphopantetheine adenylyltransferase (164 aa).

Residue Ser11 participates in substrate binding. Residues 11 to 12 (SF) and His19 contribute to the ATP site. Lys43, Ala76, and Arg90 together coordinate substrate. ATP contacts are provided by residues 91 to 93 (GLR), Glu101, and 126 to 132 (YQHISSS).

It belongs to the bacterial CoaD family. In terms of assembly, homohexamer. The cofactor is Mg(2+).

Its subcellular location is the cytoplasm. It catalyses the reaction (R)-4'-phosphopantetheine + ATP + H(+) = 3'-dephospho-CoA + diphosphate. Its pathway is cofactor biosynthesis; coenzyme A biosynthesis; CoA from (R)-pantothenate: step 4/5. Functionally, reversibly transfers an adenylyl group from ATP to 4'-phosphopantetheine, yielding dephospho-CoA (dPCoA) and pyrophosphate. The chain is Phosphopantetheine adenylyltransferase from Streptococcus sanguinis (strain SK36).